The chain runs to 323 residues: L-lactate dehydrogenase (323 aa).

Positions 12, 33, and 65 each coordinate NAD(+). Substrate-binding positions include R94 and 126-129; that span reads NPCD. T149 lines the NAD(+) pocket. Residue 154–157 coordinates substrate; sequence ETMR. H181 (proton acceptor) is an active-site residue. T234 provides a ligand contact to substrate.

The protein belongs to the LDH/MDH superfamily. LDH family. Homotetramer.

Its subcellular location is the cytoplasm. It carries out the reaction (S)-lactate + NAD(+) = pyruvate + NADH + H(+). It participates in fermentation; pyruvate fermentation to lactate; (S)-lactate from pyruvate: step 1/1. Functionally, catalyzes the conversion of lactate to pyruvate. In Mycoplasmoides gallisepticum (strain R(low / passage 15 / clone 2)) (Mycoplasma gallisepticum), this protein is L-lactate dehydrogenase.